A 161-amino-acid chain; its full sequence is MTSIVEALVPGGKANPGPPLGPALGPLGVNIKEVVEKINEKTRDYNGMQVPVKVIVDDKKNVEIEVGTPPTASLVMKELGIQKGSGNAGSEVVGNLTISQVAKVARMKKEDVLSYDLKAAMKEVMGSCVPMGVNVEGMKAKDCQKALDEGKFDDLLAGEAW.

This sequence belongs to the universal ribosomal protein uL11 family. As to quaternary structure, part of the ribosomal stalk of the 50S ribosomal subunit. Interacts with L10 and the large rRNA to form the base of the stalk. L10 forms an elongated spine to which L12 dimers bind in a sequential fashion forming a multimeric L10(L12)X complex.

Functionally, forms part of the ribosomal stalk which helps the ribosome interact with GTP-bound translation factors. This Methanosarcina acetivorans (strain ATCC 35395 / DSM 2834 / JCM 12185 / C2A) protein is Large ribosomal subunit protein uL11.